The primary structure comprises 251 residues: MIFHKIYENKLLRSVRKGAIPHHIAIIMDGNRRFARKKGLEPHEGHFFGSKKAEEVLEWCWDLGVKMLTLYAFSTENFRRSEKEKKNIFQLLESELRRLLKDRRTYERELRVKVVGKRELLPENLRETIKEVEERTKKHRRHYLNVAVAYGGRQEIIDAVRAILRKVRKGEVRPEEIDEKMLEEHLYGEGRYSKVDLIIRTGGEQRLSNFLPWQAANSVAYFCDVYWPEFRKIDLLRAIRAWQYRKSHEVV.

The active site involves Asp-29. Asp-29 contributes to the Mg(2+) binding site. Residues 30-33, Phe-34, His-46, and 74-76 contribute to the substrate site; these read GNRR and STE. Residue Asn-77 is the Proton acceptor of the active site. Substrate-binding positions include Phe-78, Arg-80, Arg-200, and 206–208; that span reads RLS.

It belongs to the UPP synthase family. In terms of assembly, homodimer. It depends on Mg(2+) as a cofactor.

The catalysed reaction is geranylgeranyl diphosphate + 7 isopentenyl diphosphate = tri-trans,hepta-cis-undecaprenyl diphosphate + 7 diphosphate. Its function is as follows. Catalyzes the sequential condensation of isopentenyl diphosphate (IPP) with geranylgeranyl diphosphate (GGPP) to yield (2Z,6Z,10Z,14Z,18Z,22Z,26Z,30E,34E,38E)-undecaprenyl diphosphate (tritrans,heptacis-UPP). It is probably the precursor of glycosyl carrier lipids. The polypeptide is Tritrans,polycis-undecaprenyl-diphosphate synthase (geranylgeranyl-diphosphate specific) (Archaeoglobus fulgidus (strain ATCC 49558 / DSM 4304 / JCM 9628 / NBRC 100126 / VC-16)).